The chain runs to 315 residues: Cytochrome c biogenesis protein CcsA (315 aa).

A run of 7 helical transmembrane segments spans residues 17–37 (LGFAAFLFLLMALPISFWAVA), 72–92 (ISNLYESLCFLTWGCTLAQLF), 101–121 (IVSAVATPVSLLSIGFASFVL), 146–166 (VIMCSYAALLIGSILSFGVFL), 221–241 (SITAGFLLLTVGLISGAVWAN), 255–272 (TWALICWLVYAAYLHTRI), and 282–302 (AILAIAGFFVIIVCYIGVNLL).

This sequence belongs to the CcmF/CycK/Ccl1/NrfE/CcsA family. In terms of assembly, may interact with ccs1.

It localises to the cellular thylakoid membrane. In terms of biological role, required during biogenesis of c-type cytochromes (cytochrome c6 and cytochrome f) at the step of heme attachment. The chain is Cytochrome c biogenesis protein CcsA from Prochlorococcus marinus (strain NATL2A).